We begin with the raw amino-acid sequence, 547 residues long: CAP-Gly domain-containing linker protein 3 (547 aa).

A disordered region spans residues M1–A49. Acidic residues predominate over residues E16–V27. 3 ANK repeats span residues T117–R158, T160–S191, and N197–R229. In terms of domain architecture, CAP-Gly 1 spans G314 to S356. Residues D365 to G413 form a disordered region. The segment covering P367 to T377 has biased composition (low complexity). T374 is modified (phosphothreonine). The segment covering G387–T399 has biased composition (basic residues). Polar residues predominate over residues P400–Q410. At S401 the chain carries Phosphoserine. The 43-residue stretch at G436–P478 folds into the CAP-Gly 2 domain. The tract at residues S488 to S547 is goLD. S-palmitoyl cysteine attachment occurs at residues C534 and C535.

Homodimer. Interacts with AKT1 and AKT2; when AKT1 and AKT2 are phosphorylated and activated, affinity is higher for AKT2. Interacts with ZDHHC13 (via ANK repeats). Interacts with ZDHHC17 (via ANK repeats). Post-translationally, palmitoylation by ZDHHC17 regulates association with the plasma membrane.

Its subcellular location is the cell membrane. It is found in the cytoplasm. It localises to the golgi apparatus. The protein localises to the golgi stack. Functions as a cytoplasmic linker protein. Involved in TGN-endosome dynamics. May modulate the cellular compartmentalization of AKT kinase family and promote its cell membrane localization, thereby playing a role in glucose transport in adipocytes. The chain is CAP-Gly domain-containing linker protein 3 (CLIP3) from Homo sapiens (Human).